The sequence spans 169 residues: Succinate dehydrogenase cytochrome b560 subunit, mitochondrial (169 aa).

A mitochondrion-targeting transit peptide spans 1 to 29; sequence MAALLLRHVGRHCLRAHFSPQLCIRNAVP. The Mitochondrial matrix segment spans residues 30–65; that stretch reads LGTTAKEEMERFWNKNIGSNRPLSPHITIYSWSLPM. The chain crosses the membrane as a helical span at residues 66–90; that stretch reads AMSICHRGTGIALSAGVSLFGMSAL. At 91–110 the chain is on the mitochondrial intermembrane side; sequence LLPGNFESYLELVKSLCLGP. A helical membrane pass occupies residues 111–139; it reads ALIHTAKFALVFPLMYHTWNGIRHLMWDL. His-127 lines the heme b pocket. At 140 to 146 the chain is on the mitochondrial matrix side; it reads GKGLKIP. The chain crosses the membrane as a helical span at residues 147-167; that stretch reads QLYQSGVVVLVLTVLSSMGLA. Residues 168 to 169 lie on the Mitochondrial intermembrane side of the membrane; sequence AM.

This sequence belongs to the cytochrome b560 family. In terms of assembly, component of complex II composed of four subunits: the flavoprotein (FP) SDHA, iron-sulfur protein (IP) SDHB, and a cytochrome b560 composed of SDHC and SDHD. It depends on heme b as a cofactor.

It localises to the mitochondrion inner membrane. It participates in carbohydrate metabolism; tricarboxylic acid cycle. Membrane-anchoring subunit of succinate dehydrogenase (SDH) that is involved in complex II of the mitochondrial electron transport chain and is responsible for transferring electrons from succinate to ubiquinone (coenzyme Q). SDH also oxidizes malate to the non-canonical enol form of oxaloacetate, enol-oxaloacetate. Enol-oxaloacetate, which is a potent inhibitor of the succinate dehydrogenase activity, is further isomerized into keto-oxaloacetate. The chain is Succinate dehydrogenase cytochrome b560 subunit, mitochondrial (SDHC) from Homo sapiens (Human).